The sequence spans 160 residues: Cytochrome b6-f complex subunit 4 (160 aa).

3 helical membrane-spanning segments follow: residues L36–V56, L95–E115, and A131–I151.

Belongs to the cytochrome b family. PetD subfamily. The 4 large subunits of the cytochrome b6-f complex are cytochrome b6, subunit IV (17 kDa polypeptide, PetD), cytochrome f and the Rieske protein, while the 4 small subunits are PetG, PetL, PetM and PetN. The complex functions as a dimer.

The protein resides in the cellular thylakoid membrane. In terms of biological role, component of the cytochrome b6-f complex, which mediates electron transfer between photosystem II (PSII) and photosystem I (PSI), cyclic electron flow around PSI, and state transitions. This Trichodesmium erythraeum (strain IMS101) protein is Cytochrome b6-f complex subunit 4.